The sequence spans 450 residues: Phosphoglucosamine mutase (450 aa).

Residue Ser-101 is the Phosphoserine intermediate of the active site. Mg(2+) contacts are provided by Ser-101, Asp-240, Asp-242, and Asp-244. Ser-101 carries the phosphoserine modification.

It belongs to the phosphohexose mutase family. Mg(2+) serves as cofactor. Post-translationally, activated by phosphorylation.

It catalyses the reaction alpha-D-glucosamine 1-phosphate = D-glucosamine 6-phosphate. Functionally, catalyzes the conversion of glucosamine-6-phosphate to glucosamine-1-phosphate. The sequence is that of Phosphoglucosamine mutase from Streptococcus thermophilus (strain CNRZ 1066).